The sequence spans 638 residues: 1-deoxy-D-xylulose-5-phosphate synthase (638 aa).

Residues His76 and 117-119 (AHS) contribute to the thiamine diphosphate site. A Mg(2+)-binding site is contributed by Asp148. Thiamine diphosphate is bound by residues 149–150 (GS), Asn177, Tyr287, and Glu369. Asn177 is a binding site for Mg(2+).

It belongs to the transketolase family. DXPS subfamily. Homodimer. Requires Mg(2+) as cofactor. Thiamine diphosphate is required as a cofactor.

It catalyses the reaction D-glyceraldehyde 3-phosphate + pyruvate + H(+) = 1-deoxy-D-xylulose 5-phosphate + CO2. It functions in the pathway metabolic intermediate biosynthesis; 1-deoxy-D-xylulose 5-phosphate biosynthesis; 1-deoxy-D-xylulose 5-phosphate from D-glyceraldehyde 3-phosphate and pyruvate: step 1/1. Its function is as follows. Catalyzes the acyloin condensation reaction between C atoms 2 and 3 of pyruvate and glyceraldehyde 3-phosphate to yield 1-deoxy-D-xylulose-5-phosphate (DXP). The sequence is that of 1-deoxy-D-xylulose-5-phosphate synthase from Rhodopseudomonas palustris (strain HaA2).